The following is a 74-amino-acid chain: Omega-conotoxin-like PuIIA (74 aa).

The signal sequence occupies residues 1–22; it reads MKLTCVVIVAVLFLTACQLITA. Positions 23–46 are excised as a propeptide; it reads ETYSRGEQKHRALSSTDKNSKLTR. 3 disulfides stabilise this stretch: Cys48-Cys62, Cys55-Cys66, and Cys61-Cys73.

It belongs to the conotoxin O1 superfamily. Expressed by the venom duct.

It localises to the secreted. Functionally, omega-conotoxins act at presynaptic membranes, they bind and block voltage-gated calcium channels (Cav). This chain is Omega-conotoxin-like PuIIA, found in Conus pulicarius (Flea-bitten cone).